We begin with the raw amino-acid sequence, 299 residues long: MESPPHATASADEMPSIWKEQHAQDAPPGFVPPMGPGEVAAVESLLGYEFRDKALVEEALTHGSFYYPYRPGVTYERLEYLGDAVLTCVVSREVFLTYGQLQPGPLTRLRAANVDKEKLARVAVVHGLHHFLRHKAPNLDGQITDFIEELSMYPIHSNGLLDPPKVLCDVVESLIGAIYCDSNFNQEIVWQVFQKLADPLISLETLGKHPVSELFEFCQKTRRGVKIVKDEWDKNLTVEVLIDGEMVGRATYAQKKEIAQNRAAKAALDKLKETLGQSQTEPMSAEVSEQFNKIDLTGS.

The 145-residue stretch at 39-183 (VAAVESLLGY…LIGAIYCDSN (145 aa)) folds into the RNase III domain. 3 residues coordinate Mg(2+): Glu-79, Asp-169, and Glu-172. The region spanning 209–273 (HPVSELFEFC…AKAALDKLKE (65 aa)) is the DRBM domain. Residues 274-299 (TLGQSQTEPMSAEVSEQFNKIDLTGS) are disordered. Residues 275 to 291 (LGQSQTEPMSAEVSEQF) show a composition bias toward polar residues.

The cofactor is Mg(2+). Mn(2+) serves as cofactor.

Cleaves double-stranded RNA (dsRNA). In Oryza sativa subsp. japonica (Rice), this protein is Ribonuclease 3-like protein 3.